The chain runs to 1159 residues: Phosphatidylinositol 3-kinase age-1 (1159 aa).

Residues 1–25 (MSMGRSSSTTFRNRTASHGSRSLGS) show a composition bias toward polar residues. Positions 1 to 28 (MSMGRSSSTTFRNRTASHGSRSLGSAET) are disordered. A PI3K-ABD domain is found at 79–179 (SEGVADMIVL…FPMLFLFEPD (101 aa)). One can recognise a PI3K-RBD domain in the interval 272 to 363 (RKSEANEVWE…YRCPGFVVRR (92 aa)). The region spanning 430 to 588 (LDSNLMIRPV…VKMPNEAQYK (159 aa)) is the C2 PI3K-type domain. Positions 607-793 (DYEACIGDPG…SLLMEAYLRG (187 aa)) constitute a PIK helical domain. In terms of domain architecture, PI3K/PI4K catalytic spans 858-1159 (VIEKAIVLGS…NWLFHAMKHY (302 aa)). A G-loop region spans residues 864–870 (VLGSAKQ). The interval 1028-1036 (GIKDRHSDN) is catalytic loop. An activation loop region spans residues 1047–1073 (HIDFGHILGHGKTKLGIQRDRQPFILT).

This sequence belongs to the PI3/PI4-kinase family.

It carries out the reaction a 1,2-diacyl-sn-glycero-3-phospho-(1D-myo-inositol) + ATP = a 1,2-diacyl-sn-glycero-3-phospho-(1D-myo-inositol-3-phosphate) + ADP + H(+). Phosphatidylinositol 3-kinase homolog that regulates longevity and diapause. Promotes cell survival during embryonic development by recruiting akt-1/2 to the plasma membrane through the production of PtdIns(3,4,5)P3. Could function in the development or neuroendocrine signaling of the dauer pathway. Mediates susceptibility to enteropathogenic E.coli infection. May negatively regulate AYI interneuron neurite outgrowth. Plays a role in aversive olfactory learning when an odor is associated with food deprivation. Regulates this process by promoting the nuclear relocalization of egl-4 in AWC olfactory neurons after odor conditioning. The protein is Phosphatidylinositol 3-kinase age-1 (age-1) of Caenorhabditis briggsae.